The following is a 505-amino-acid chain: Phosphoethanolamine N-methyltransferase (505 aa).

S-adenosyl-L-homocysteine contacts are provided by G76, R81, D97, D122, V123, and N141. Phosphocholine contacts are provided by S174, S179, G180, R184, and Y191. Residues 260–261 and Y269 each bind N-methylethanolamine phosphate; that span reads QY. Y269 lines the phosphocholine pocket. V278, S279, G305, D327, D353, C354, and R370 together coordinate S-adenosyl-L-homocysteine. Phosphocholine-binding residues include Y401, Y415, R419, Y421, and K487. N-methylethanolamine phosphate contacts are provided by residues Y401, Y415, 419-421, and K487; that span reads RGY.

It belongs to the class I-like SAM-binding methyltransferase superfamily. PEAMT family.

The catalysed reaction is phosphoethanolamine + S-adenosyl-L-methionine = N-methylethanolamine phosphate + S-adenosyl-L-homocysteine + H(+). It carries out the reaction N-methylethanolamine phosphate + S-adenosyl-L-methionine = N,N-dimethylethanolamine phosphate + S-adenosyl-L-homocysteine + H(+). It catalyses the reaction N,N-dimethylethanolamine phosphate + S-adenosyl-L-methionine = phosphocholine + S-adenosyl-L-homocysteine + H(+). It participates in phospholipid metabolism; phosphatidylcholine biosynthesis; phosphocholine from phosphoethanolamine: step 1/1. With respect to regulation, inhibited by phosphatidic acid. Involved in phosphocholine biosynthesis. Catalyzes the N-methylation of phosphoethanolamine, phosphomonomethylethanolamine and phosphodimethylethanolamine, the three methylation steps required to convert phosphoethanolamine to phosphocholine (PC). This Triticum aestivum (Wheat) protein is Phosphoethanolamine N-methyltransferase.